A 207-amino-acid chain; its full sequence is Cytochrome c biogenesis ATP-binding export protein CcmA 1 (207 aa).

The region spanning L6–A207 is the ABC transporter domain. ATP is bound at residue G38–T45.

It belongs to the ABC transporter superfamily. CcmA exporter (TC 3.A.1.107) family. In terms of assembly, the complex is composed of two ATP-binding proteins (CcmA) and two transmembrane proteins (CcmB).

It is found in the cell inner membrane. The enzyme catalyses heme b(in) + ATP + H2O = heme b(out) + ADP + phosphate + H(+). In terms of biological role, part of the ABC transporter complex CcmAB involved in the biogenesis of c-type cytochromes; once thought to export heme, this seems not to be the case, but its exact role is uncertain. Responsible for energy coupling to the transport system. The protein is Cytochrome c biogenesis ATP-binding export protein CcmA 1 of Cupriavidus metallidurans (strain ATCC 43123 / DSM 2839 / NBRC 102507 / CH34) (Ralstonia metallidurans).